The following is a 1220-amino-acid chain: Plasma membrane calcium-transporting ATPase 1 (1220 aa).

An N-acetylglycine modification is found at G2. Residues 2–105 are Cytoplasmic-facing; it reads GDMANNSVAY…KTFLQLVWEA (104 aa). Residues S8 and S17 each carry the phosphoserine modification. Residues 106-126 traverse the membrane as a helical segment; the sequence is LQDVTLIILEIAAIVSLGLSF. The Extracellular portion of the chain corresponds to 127–154; the sequence is YQPPEGDNALCGEVSVGEEEGEGETGWI. A helical membrane pass occupies residues 155 to 175; the sequence is EGAAILLSVVCVVLVTAFNDW. Residues 176-366 lie on the Cytoplasmic side of the membrane; sequence SKEKQFRGLQ…KEKSVLQGKL (191 aa). Positions 297-356 are disordered; it reads EEEKKDEKKKEKKNKKQDGAIENRNKAKAQDGAAMEMQPLKSEEGGDGDEKDKKKANLPK. Composition is skewed to basic and acidic residues over residues 312 to 325 and 337 to 356; these read KQDG…KAKA and KSEE…NLPK. A Phosphoserine modification is found at S338. The chain crosses the membrane as a helical span at residues 367–386; the sequence is TKLAVQIGKAGLLMSAITVI. Residues 387 to 418 lie on the Extracellular side of the membrane; sequence ILVLYFVIDTFWVQKRPWLAECTPIYIQYFVK. The helical transmembrane segment at 419–439 threads the bilayer; that stretch reads FFIIGVTVLVVAVPEGLPLAV. The Cytoplasmic segment spans residues 440–855; sequence TISLAYSVKK…RNVYDSISKF (416 aa). D475 functions as the 4-aspartylphosphate intermediate in the catalytic mechanism. Mg(2+)-binding residues include D475, T477, D797, and D801. A helical membrane pass occupies residues 856-876; the sequence is LQFQLTVNVVAVIVAFTGACI. Topologically, residues 877–882 are extracellular; it reads TQDSPL. Residues 883–903 traverse the membrane as a helical segment; sequence KAVQMLWVNLIMDTLASLALA. The Cytoplasmic segment spans residues 904-927; sequence TEPPTESLLLRKPYGRNKPLISRT. The chain crosses the membrane as a helical span at residues 928–948; it reads MMKNILGHAFYQLVVVFTLLF. Residues 949–971 are Extracellular-facing; sequence AGEKFFDIDSGRNAPLHAPPSEH. Residues 972–991 form a helical membrane-spanning segment; the sequence is YTIVFNTFVLMQLFNEINAR. Residues 992-1005 lie on the Cytoplasmic side of the membrane; sequence KIHGERNVFEGIFN. A helical membrane pass occupies residues 1006–1027; the sequence is NAIFCTIVLGTFVVQIIIVQFG. At 1028 to 1039 the chain is on the extracellular side; that stretch reads GKPFSCSELSIE. A helical transmembrane segment spans residues 1040 to 1060; sequence QWLWSIFLGMGTLLWGQLIST. At 1061–1220 the chain is on the cytoplasmic side; it reads IPTSRLKFLK…SPLHSLETSL (160 aa). The tract at residues 1100 to 1117 is calmodulin-binding subdomain A; the sequence is LRRGQILWFRGLNRIQTQ. T1116 carries the phosphothreonine; by PKC modification. Positions 1118–1127 are calmodulin-binding subdomain B; sequence IRVVNAFRSS. The required for basolateral membrane targeting stretch occupies residues 1118-1220; sequence IRVVNAFRSS…SPLHSLETSL (103 aa). Phosphoserine is present on residues S1140 and S1155. The disordered stretch occupies residues 1160 to 1220; the sequence is PLIDDTDAED…SPLHSLETSL (61 aa). Position 1165 is a phosphothreonine (T1165). Phosphoserine occurs at positions 1178 and 1182. Over residues 1200 to 1220 the composition is skewed to polar residues; that stretch reads MNKSATSSSPGSPLHSLETSL.

Belongs to the cation transport ATPase (P-type) (TC 3.A.3) family. Type IIB subfamily. In terms of assembly, monomer. Dimer. Oligomer. Calmodulin binding. Interacts with PDZD11. Interacts with SLC35G1 and STIM1. Interacts with YWHAE; interacts with the monomeric and dimeric forms of the YWHAE but prefer the monomer form; this interaction inhibits calcium-transporting ATPase activity. Interacts with NPTN; this interaction stabilizes ATP2B1 and increases ATPase activity; this interaction controls T cell calcium homeostasis following T cell activation. Interacts with EPB41; regulates small intestinal calcium absorption through regulation of membrane expression of ATP2B1.

It localises to the cell membrane. Its subcellular location is the basolateral cell membrane. The protein resides in the synapse. It is found in the presynaptic cell membrane. The protein localises to the cytoplasmic vesicle. It localises to the secretory vesicle. Its subcellular location is the synaptic vesicle membrane. The enzyme catalyses Ca(2+)(in) + ATP + H2O = Ca(2+)(out) + ADP + phosphate + H(+). In terms of biological role, catalyzes the hydrolysis of ATP coupled with the transport of calcium from the cytoplasm to the extracellular space thereby maintaining intracellular calcium homeostasis. Plays a role in blood pressure regulation through regulation of intracellular calcium concentration and nitric oxide production leading to regulation of vascular smooth muscle cells vasoconstriction. Positively regulates bone mineralization through absorption of calcium from the intestine. Plays dual roles in osteoclast differentiation and survival by regulating RANKL-induced calcium oscillations in preosteoclasts and mediating calcium extrusion in mature osteoclasts. Regulates insulin sensitivity through calcium/calmodulin signaling pathway by regulating AKT1 activation and NOS3 activation in endothelial cells. May play a role in synaptic transmission by modulating calcium and proton dynamics at the synaptic vesicles. This is Plasma membrane calcium-transporting ATPase 1 from Sus scrofa (Pig).